Here is a 345-residue protein sequence, read N- to C-terminus: Phosphoribosylformylglycinamidine cyclo-ligase (345 aa).

Belongs to the AIR synthase family.

Its subcellular location is the cytoplasm. The enzyme catalyses 2-formamido-N(1)-(5-O-phospho-beta-D-ribosyl)acetamidine + ATP = 5-amino-1-(5-phospho-beta-D-ribosyl)imidazole + ADP + phosphate + H(+). Its pathway is purine metabolism; IMP biosynthesis via de novo pathway; 5-amino-1-(5-phospho-D-ribosyl)imidazole from N(2)-formyl-N(1)-(5-phospho-D-ribosyl)glycinamide: step 2/2. This Anaeromyxobacter sp. (strain K) protein is Phosphoribosylformylglycinamidine cyclo-ligase.